A 397-amino-acid polypeptide reads, in one-letter code: Exodeoxyribonuclease 7 large subunit (397 aa).

It belongs to the XseA family. Heterooligomer composed of large and small subunits.

It is found in the cytoplasm. The catalysed reaction is Exonucleolytic cleavage in either 5'- to 3'- or 3'- to 5'-direction to yield nucleoside 5'-phosphates.. Bidirectionally degrades single-stranded DNA into large acid-insoluble oligonucleotides, which are then degraded further into small acid-soluble oligonucleotides. This is Exodeoxyribonuclease 7 large subunit from Anaplasma marginale (strain St. Maries).